Consider the following 64-residue polypeptide: H/ACA ribonucleoprotein complex subunit 3 (64 aa).

This sequence belongs to the NOP10 family. Component of the box H/ACA small nucleolar ribonucleoprotein (H/ACA snoRNP) complex consisting of Nop60B, Gar1, NPH2 and Nop10, and associated with H/ACA-type snoRNAs.

It localises to the nucleus. Its subcellular location is the nucleolus. In terms of biological role, component of the box H/ACA small nucleolar ribonucleoprotein (H/ACA snoRNP) complex, which catalyzes pseudouridylation of rRNA. This involves the isomerization of uridine such that the ribose is subsequently attached to C5, instead of the normal N1. Pseudouridine ('psi') residues may serve to stabilize the conformation of rRNAs. Required for ribosome biogenesis. H/ACA snoRNP complex-dependent ribosome biogenesis is important in female germline cell differentiation during oogenesis. The polypeptide is H/ACA ribonucleoprotein complex subunit 3 (Drosophila melanogaster (Fruit fly)).